Reading from the N-terminus, the 367-residue chain is Biotin synthase (367 aa).

The Radical SAM core domain maps to 73 to 308 (CCGNTVDLCS…EQIIRYAGGR (236 aa)). [4Fe-4S] cluster is bound by residues cysteine 91, cysteine 95, and cysteine 98. [2Fe-2S] cluster-binding residues include cysteine 136, cysteine 173, cysteine 233, and arginine 303.

The protein belongs to the radical SAM superfamily. Biotin synthase family. In terms of assembly, homodimer. [4Fe-4S] cluster serves as cofactor. The cofactor is [2Fe-2S] cluster.

It catalyses the reaction (4R,5S)-dethiobiotin + (sulfur carrier)-SH + 2 reduced [2Fe-2S]-[ferredoxin] + 2 S-adenosyl-L-methionine = (sulfur carrier)-H + biotin + 2 5'-deoxyadenosine + 2 L-methionine + 2 oxidized [2Fe-2S]-[ferredoxin]. It participates in cofactor biosynthesis; biotin biosynthesis; biotin from 7,8-diaminononanoate: step 2/2. Catalyzes the conversion of dethiobiotin (DTB) to biotin by the insertion of a sulfur atom into dethiobiotin via a radical-based mechanism. The chain is Biotin synthase from Picosynechococcus sp. (strain ATCC 27264 / PCC 7002 / PR-6) (Agmenellum quadruplicatum).